Consider the following 145-residue polypeptide: D-aminoacyl-tRNA deacylase (145 aa).

A Gly-cisPro motif, important for rejection of L-amino acids motif is present at residues 137–138; that stretch reads GP.

This sequence belongs to the DTD family. Homodimer.

It localises to the cytoplasm. The enzyme catalyses glycyl-tRNA(Ala) + H2O = tRNA(Ala) + glycine + H(+). It carries out the reaction a D-aminoacyl-tRNA + H2O = a tRNA + a D-alpha-amino acid + H(+). In terms of biological role, an aminoacyl-tRNA editing enzyme that deacylates mischarged D-aminoacyl-tRNAs. Also deacylates mischarged glycyl-tRNA(Ala), protecting cells against glycine mischarging by AlaRS. Acts via tRNA-based rather than protein-based catalysis; rejects L-amino acids rather than detecting D-amino acids in the active site. By recycling D-aminoacyl-tRNA to D-amino acids and free tRNA molecules, this enzyme counteracts the toxicity associated with the formation of D-aminoacyl-tRNA entities in vivo and helps enforce protein L-homochirality. The sequence is that of D-aminoacyl-tRNA deacylase from Colwellia psychrerythraea (strain 34H / ATCC BAA-681) (Vibrio psychroerythus).